The chain runs to 161 residues: Afimbrial adhesin AFA-I (161 aa).

Positions 1-21 (MKKLAIIGATSVMMMTGTAQA) are cleaved as a signal peptide.

The protein belongs to the Dr-adhesin family.

The protein localises to the fimbrium. Hemagglutinins of uropathogenic E.coli mediate adherence to the upper urinary tract. These adhesins bind to the Dr blood group antigen and also agglutinate human erythrocytes in the presence of D-mannose (mannose-resistant hemagglutination (MRHA)). This chain is Afimbrial adhesin AFA-I (afaE1), found in Escherichia coli.